The primary structure comprises 138 residues: F-box protein At4g12382 (138 aa).

The F-box domain maps to 7 to 53; the sequence is NPSFADLPSSLIEVIMSHLALKNNIRASAACKSWYEVGVSVRVVEKH.

The chain is F-box protein At4g12382 from Arabidopsis thaliana (Mouse-ear cress).